Here is a 225-residue protein sequence, read N- to C-terminus: Recoverin family protein DDB_G0274781 (225 aa).

The segment covering 1 to 13 (MGNKQGKSPNNSK) has biased composition (low complexity). The segment at 1–20 (MGNKQGKSPNNSKGGKKYKI) is disordered. G2 carries the N-myristoyl glycine lipid modification. 3 EF-hand domains span residues 78–113 (DNSPFGDRLFDLLDTNKDNTVDLQEFISGLSILCKG), 114–149 (TAEEKLELSFKAYDIDGNGYITKSELSQMFQQAWIS), and 174–209 (MAQIFADGAFSSLDVNGDGKLSFNEFKQFAMSHPKI). D91, N93, D95, T97, E102, D127, D129, N131, Y133, E138, D187, N189, D191, K193, and E198 together coordinate Ca(2+).

It belongs to the recoverin family.

The protein is Recoverin family protein DDB_G0274781 of Dictyostelium discoideum (Social amoeba).